Reading from the N-terminus, the 446-residue chain is Asparagine--tRNA ligase (446 aa).

It belongs to the class-II aminoacyl-tRNA synthetase family. As to quaternary structure, homodimer.

The protein resides in the cytoplasm. It carries out the reaction tRNA(Asn) + L-asparagine + ATP = L-asparaginyl-tRNA(Asn) + AMP + diphosphate + H(+). In Sorangium cellulosum (strain So ce56) (Polyangium cellulosum (strain So ce56)), this protein is Asparagine--tRNA ligase.